The following is a 383-amino-acid chain: WD repeat-containing protein 55 (383 aa).

Positions 1–11 (MDRTCEERPAE) are enriched in basic and acidic residues. The interval 1–33 (MDRTCEERPAEDGSDEEDPDSMEAPTRIRDTPE) is disordered. The span at 12 to 21 (DGSDEEDPDS) shows a compositional bias: acidic residues. S14 carries the phosphoserine modification. WD repeat units lie at residues 36–75 (VLEA…GETK), 82–121 (HHLK…LERR), 125–163 (AHGA…PLMD), 166–205 (QHEE…FELL), 208–247 (PQSG…ATSD), 250–289 (ALRA…VVGS), and 293–332 (HTGE…AVVV). At S354 the chain carries Phosphoserine. The segment at 363–383 (REEGEDSMAQEEKEETGDDSD) is disordered. Positions 365–383 (EGEDSMAQEEKEETGDDSD) are enriched in acidic residues. At T378 the chain carries Phosphothreonine. The residue at position 382 (S382) is a Phosphoserine.

Belongs to the WD repeat WDR55 family.

It is found in the nucleus. It localises to the nucleolus. The protein localises to the cytoplasm. Its function is as follows. Nucleolar protein that acts as a modulator of rRNA synthesis. Plays a central role during organogenesis. This is WD repeat-containing protein 55 (WDR55) from Homo sapiens (Human).